We begin with the raw amino-acid sequence, 476 residues long: Cobyric acid synthase (476 aa).

The 187-residue stretch at 242 to 428 folds into the GATase cobBQ-type domain; that stretch reads AFRVVVPVPP…LHGLFDTPDA (187 aa). The Nucleophile role is filled by cysteine 323. Histidine 420 is an active-site residue.

It belongs to the CobB/CobQ family. CobQ subfamily.

It participates in cofactor biosynthesis; adenosylcobalamin biosynthesis. Functionally, catalyzes amidations at positions B, D, E, and G on adenosylcobyrinic A,C-diamide. NH(2) groups are provided by glutamine, and one molecule of ATP is hydrogenolyzed for each amidation. The sequence is that of Cobyric acid synthase from Janthinobacterium sp. (strain Marseille) (Minibacterium massiliensis).